A 517-amino-acid chain; its full sequence is MSDAILGEQLAESSDFIAAIDQGTTSTRCMIFDHHGAEVARHQLEHEQILPRAGWVEHNPVEIWERTASVLISVLNATNLSPKDIAALGITNQRETTLVWNRHTGRPYYNAIVWQDTRTDRIASALDRDGRGNLIRRKAGLPPATYFSGGKLQWILENVDGVRAAAENGDALFGTPDTWVLWNLTGGPRGGVHVTDVTNASRTMLMDLETLDWDDELLSLFSIPRAMLPEIASSAPSEPYGVTLATGPVGGEVPITGVLGDQHAAMVGQVCLAPGEAKNTYGTGNFLLLNTGETIVRSNNGLLTTVCYQFGNAKPVYALEGSIAVTGSAVQWLRDQLGIISGAAQSEALARQVPDNGGMYFVPAFSGLFAPYWRSDARGAIVGLSRFNTNAHLARATLEAICYQSRDVVDAMEADSGVRLQVLKVDGGITGNDLCMQIQADVLGVDVVRPVVAETTALGVAYAAGLAVGFWAAPSDLRANWREDKRWTPTWDDDERAAGYAGWRKAVQRTLDWVDVS.

T24 serves as a coordination point for ADP. ATP is bound by residues T24, T25, and S26. T24 contacts sn-glycerol 3-phosphate. Position 28 (R28) interacts with ADP. Sn-glycerol 3-phosphate contacts are provided by R94, E95, Y146, and D261. Glycerol contacts are provided by R94, E95, Y146, D261, and Q262. ADP contacts are provided by T283 and G327. Residues T283, G327, Q331, and G428 each coordinate ATP. 2 residues coordinate ADP: G428 and N432.

This sequence belongs to the FGGY kinase family.

The catalysed reaction is glycerol + ATP = sn-glycerol 3-phosphate + ADP + H(+). It functions in the pathway polyol metabolism; glycerol degradation via glycerol kinase pathway; sn-glycerol 3-phosphate from glycerol: step 1/1. Its activity is regulated as follows. Inhibited by fructose 1,6-bisphosphate (FBP). Its function is as follows. Key enzyme in the regulation of glycerol uptake and metabolism. Catalyzes the phosphorylation of glycerol to yield sn-glycerol 3-phosphate. The protein is Glycerol kinase of Mycobacterium tuberculosis (strain ATCC 25177 / H37Ra).